Consider the following 699-residue polypeptide: Keratinocyte proline-rich protein (699 aa).

Ser436 is modified (phosphoserine). Composition is skewed to pro residues over residues 448–477 (PYPR…PSPE) and 513–533 (DPCP…PSPE). Residues 448–533 (PYPRPEPCPS…PCPEPCPSPE (86 aa)) form a disordered region.

In terms of tissue distribution, expressed in the stratified squamous epithelial layers of the skin, esophagus and tongue.

The protein localises to the cytoplasm. The sequence is that of Keratinocyte proline-rich protein (Kprp) from Rattus norvegicus (Rat).